The sequence spans 319 residues: Transmembrane and ubiquitin-like domain-containing protein 2 (319 aa).

The helical transmembrane segment at 36–56 threads the bilayer; the sequence is VMVVAGVVVLTLALVLAWLST. Disordered regions lie at residues 88–130 and 146–165; these read VNQG…GDME and QAGL…DSTC. Basic and acidic residues predominate over residues 95 to 111; sequence PTEHPHPSGGSDDKAEE. One can recognise a Ubiquitin-like domain in the interval 173 to 246; that stretch reads INVRLKFLND…IHCHRSPPGA (74 aa). A run of 2 helical transmembrane segments spans residues 264–284 and 293–313; these read LGVN…GVVW and FFTA…SFLV.

The protein localises to the membrane. The protein is Transmembrane and ubiquitin-like domain-containing protein 2 (Tmub2) of Rattus norvegicus (Rat).